The chain runs to 156 residues: Small ribosomal subunit protein uS7 (156 aa).

This sequence belongs to the universal ribosomal protein uS7 family. As to quaternary structure, part of the 30S ribosomal subunit. Contacts proteins S9 and S11.

Its function is as follows. One of the primary rRNA binding proteins, it binds directly to 16S rRNA where it nucleates assembly of the head domain of the 30S subunit. Is located at the subunit interface close to the decoding center, probably blocks exit of the E-site tRNA. The chain is Small ribosomal subunit protein uS7 from Cupriavidus necator (strain ATCC 17699 / DSM 428 / KCTC 22496 / NCIMB 10442 / H16 / Stanier 337) (Ralstonia eutropha).